Here is a 99-residue protein sequence, read N- to C-terminus: Large ribosomal subunit protein bL21 (99 aa).

Belongs to the bacterial ribosomal protein bL21 family. Part of the 50S ribosomal subunit. Contacts protein L20.

This protein binds to 23S rRNA in the presence of protein L20. In Mycoplasmopsis pulmonis (strain UAB CTIP) (Mycoplasma pulmonis), this protein is Large ribosomal subunit protein bL21.